A 397-amino-acid chain; its full sequence is G2/mitotic-specific cyclin-B1 (397 aa).

Belongs to the cyclin family. Cyclin AB subfamily. Interacts with the cdc2 protein kinase to form a serine/threonine kinase holoenzyme complex also known as maturation promoting factor (MPF). The cyclin subunit imparts substrate specificity to the complex. When not in a complex with cdc2, interacts with spdya. Interacts with nap1l1. Interacts with nanos1.

It localises to the cytoplasm. The protein resides in the cytoskeleton. It is found in the microtubule organizing center. The protein localises to the centrosome. Its subcellular location is the nucleus. Its function is as follows. Essential for the control of the cell cycle at the G2/M (mitosis) transition. This is G2/mitotic-specific cyclin-B1 (ccnb1) from Xenopus laevis (African clawed frog).